The sequence spans 969 residues: RNA polymerase-associated protein RapA (969 aa).

Residues 164-334 (EVGRRHAPRV…FARLRLLDSD (171 aa)) form the Helicase ATP-binding domain. Residue 177-184 (DEVGLGKT) participates in ATP binding. The DEAH box motif lies at 280-283 (DEAH). Positions 492 to 668 (RVNWLLEKLK…GSNEALNDVI (177 aa)) constitute a Helicase C-terminal domain.

It belongs to the SNF2/RAD54 helicase family. RapA subfamily. As to quaternary structure, interacts with the RNAP. Has a higher affinity for the core RNAP than for the holoenzyme. Its ATPase activity is stimulated by binding to RNAP.

Transcription regulator that activates transcription by stimulating RNA polymerase (RNAP) recycling in case of stress conditions such as supercoiled DNA or high salt concentrations. Probably acts by releasing the RNAP, when it is trapped or immobilized on tightly supercoiled DNA. Does not activate transcription on linear DNA. Probably not involved in DNA repair. This chain is RNA polymerase-associated protein RapA, found in Vibrio vulnificus (strain YJ016).